Here is a 149-residue protein sequence, read N- to C-terminus: UPF0310 protein msl3206 (149 aa).

It belongs to the UPF0310 family.

In Mesorhizobium japonicum (strain LMG 29417 / CECT 9101 / MAFF 303099) (Mesorhizobium loti (strain MAFF 303099)), this protein is UPF0310 protein msl3206.